A 318-amino-acid polypeptide reads, in one-letter code: MDIAFIIDPIASLDPGHDTSVALMEAAQAAGARVWVTEISQLLIREGQVWAALTPIQLSPVQLVDGQWQIPQPWFELGALEWRPLNTFRAVWMRKDPPVNTAYLYATYCLDLVDPQTTLVLNSPAGLRHANEKMYALQFTSVIPKTIVTADKQRIREFVQQQGMAVLKPLGGKGGEGILFLQAGDRNLNSMIEISTQRGQLPVMLQEYLPAAKEGDKRIILLNGEPIGAVNRIPTGDEFRGNMATGGRVAAAEITERDRQICQTLAPALRRDGLYFVGIDVIGGYLTEVNVTSPTGVREIDRLNGTRLGQQVMAWLFS.

Positions 133–317 constitute an ATP-grasp domain; the sequence is KMYALQFTSV…LGQQVMAWLF (185 aa). 159-215 contacts ATP; it reads VQQQGMAVLKPLGGKGGEGILFLQAGDRNLNSMIEISTQRGQLPVMLQEYLPAAKEG. Glu-288 and Asn-290 together coordinate Mg(2+).

The protein belongs to the prokaryotic GSH synthase family. Mg(2+) serves as cofactor. Mn(2+) is required as a cofactor.

It catalyses the reaction gamma-L-glutamyl-L-cysteine + glycine + ATP = glutathione + ADP + phosphate + H(+). Its pathway is sulfur metabolism; glutathione biosynthesis; glutathione from L-cysteine and L-glutamate: step 2/2. This is Glutathione synthetase from Thermosynechococcus vestitus (strain NIES-2133 / IAM M-273 / BP-1).